A 283-amino-acid chain; its full sequence is Pantothenate synthetase (283 aa).

Residue M30–H37 coordinates ATP. H37 functions as the Proton donor in the catalytic mechanism. Position 61 (Q61) interacts with (R)-pantoate. Residue Q61 coordinates beta-alanine. Residue G149–D152 participates in ATP binding. Q155 is a (R)-pantoate binding site. Residues V178 and L186–R189 each bind ATP.

The protein belongs to the pantothenate synthetase family. Homodimer.

It localises to the cytoplasm. It catalyses the reaction (R)-pantoate + beta-alanine + ATP = (R)-pantothenate + AMP + diphosphate + H(+). Its pathway is cofactor biosynthesis; (R)-pantothenate biosynthesis; (R)-pantothenate from (R)-pantoate and beta-alanine: step 1/1. Functionally, catalyzes the condensation of pantoate with beta-alanine in an ATP-dependent reaction via a pantoyl-adenylate intermediate. The chain is Pantothenate synthetase from Salmonella arizonae (strain ATCC BAA-731 / CDC346-86 / RSK2980).